The primary structure comprises 415 residues: Serine--tRNA ligase (415 aa).

231 to 233 (TAE) is a binding site for L-serine. Residue 262–264 (RSE) coordinates ATP. Glu285 serves as a coordination point for L-serine. An ATP-binding site is contributed by 349 to 352 (EISS). An L-serine-binding site is contributed by Ser383.

The protein belongs to the class-II aminoacyl-tRNA synthetase family. Type-1 seryl-tRNA synthetase subfamily. In terms of assembly, homodimer. The tRNA molecule binds across the dimer.

Its subcellular location is the cytoplasm. The enzyme catalyses tRNA(Ser) + L-serine + ATP = L-seryl-tRNA(Ser) + AMP + diphosphate + H(+). It catalyses the reaction tRNA(Sec) + L-serine + ATP = L-seryl-tRNA(Sec) + AMP + diphosphate + H(+). It participates in aminoacyl-tRNA biosynthesis; selenocysteinyl-tRNA(Sec) biosynthesis; L-seryl-tRNA(Sec) from L-serine and tRNA(Sec): step 1/1. Its function is as follows. Catalyzes the attachment of serine to tRNA(Ser). Is also able to aminoacylate tRNA(Sec) with serine, to form the misacylated tRNA L-seryl-tRNA(Sec), which will be further converted into selenocysteinyl-tRNA(Sec). The chain is Serine--tRNA ligase from Helicobacter pylori (strain ATCC 700392 / 26695) (Campylobacter pylori).